A 252-amino-acid chain; its full sequence is Chitooligosaccharide deacetylase (252 aa).

Mg(2+) contacts are provided by H61 and H125.

Belongs to the YdjC deacetylase family. ChbG subfamily. In terms of assembly, homodimer. The cofactor is Mg(2+).

It localises to the cytoplasm. It catalyses the reaction N,N'-diacetylchitobiose + H2O = N-acetyl-beta-D-glucosaminyl-(1-&gt;4)-D-glucosamine + acetate. The enzyme catalyses diacetylchitobiose-6'-phosphate + H2O = N'-monoacetylchitobiose-6'-phosphate + acetate. It functions in the pathway glycan degradation; chitin degradation. Involved in the degradation of chitin. ChbG is essential for growth on the acetylated chitooligosaccharides chitobiose and chitotriose but is dispensable for growth on cellobiose and chitosan dimer, the deacetylated form of chitobiose. Deacetylation of chitobiose-6-P and chitotriose-6-P is necessary for both the activation of the chb promoter by the regulatory protein ChbR and the hydrolysis of phosphorylated beta-glucosides by the phospho-beta-glucosidase ChbF. Catalyzes the removal of only one acetyl group from chitobiose-6-P to yield monoacetylchitobiose-6-P, the inducer of ChbR and the substrate of ChbF. The sequence is that of Chitooligosaccharide deacetylase from Shigella flexneri serotype 5b (strain 8401).